The chain runs to 246 residues: Small ribosomal subunit protein uS3 (246 aa).

In terms of domain architecture, KH type-2 spans 19–98 (IDEWLAQNFY…NPMLDARVQA (80 aa)). The segment at 218-246 (LQEETASTLREHMEAARPGEEHEEDREES) is disordered. Basic and acidic residues predominate over residues 226 to 237 (LREHMEAARPGE).

The protein belongs to the universal ribosomal protein uS3 family. In terms of assembly, part of the 30S ribosomal subunit.

Functionally, binds the lower part of the 30S subunit head. In Aeropyrum pernix (strain ATCC 700893 / DSM 11879 / JCM 9820 / NBRC 100138 / K1), this protein is Small ribosomal subunit protein uS3.